We begin with the raw amino-acid sequence, 635 residues long: Threonine--tRNA ligase (635 aa).

In terms of domain architecture, TGS spans 1 to 61 (MIAITLPDGS…DRDVALAIIT (61 aa)). The segment at 242 to 533 (DHRKLGKSLD…LLENHAGALP (292 aa)) is catalytic. Zn(2+) contacts are provided by Cys-333, His-384, and His-510.

Belongs to the class-II aminoacyl-tRNA synthetase family. In terms of assembly, homodimer. It depends on Zn(2+) as a cofactor.

The protein localises to the cytoplasm. The enzyme catalyses tRNA(Thr) + L-threonine + ATP = L-threonyl-tRNA(Thr) + AMP + diphosphate + H(+). In terms of biological role, catalyzes the attachment of threonine to tRNA(Thr) in a two-step reaction: L-threonine is first activated by ATP to form Thr-AMP and then transferred to the acceptor end of tRNA(Thr). Also edits incorrectly charged L-seryl-tRNA(Thr). This chain is Threonine--tRNA ligase, found in Cupriavidus pinatubonensis (strain JMP 134 / LMG 1197) (Cupriavidus necator (strain JMP 134)).